The chain runs to 327 residues: MVRCDRGLQMLLTTAGAFAAFSLMAIAIGTDYWLYSSAHICNGTNLTMDDGPPPRRARGDLTHSGLWRVCCIEGIYKGHCFRINHFPEDNDYDHDSSEYLLRIVRASSVFPILSTILLLLGGLCIGAGRIYSRKNNIVLSAGILFVAAGLSNIIGIIVYISSNTGDPSDKRDEDKKNHYNYGWSFYFGALSFIVAETVGVLAVNIYIEKNKELRFKTKREFLKASSSSPYARMPSYRYRRRRSRSSSRSTEASPSRDVSPMGLKITGAIPMGELSMYTLSREPLKVTTAASYSPDQEASFLQVHDFFQQDLKEGFHVSMLNRRTTPV.

The Cytoplasmic portion of the chain corresponds to 1–9 (MVRCDRGLQ). The chain crosses the membrane as a helical span at residues 10-30 (MLLTTAGAFAAFSLMAIAIGT). At 31-107 (DYWLYSSAHI…EYLLRIVRAS (77 aa)) the chain is on the extracellular side. 2 N-linked (GlcNAc...) asparagine glycosylation sites follow: asparagine 42 and asparagine 45. A helical membrane pass occupies residues 108–128 (SVFPILSTILLLLGGLCIGAG). Residues 129–136 (RIYSRKNN) are Cytoplasmic-facing. A helical membrane pass occupies residues 137-157 (IVLSAGILFVAAGLSNIIGII). The Extracellular segment spans residues 158-186 (VYISSNTGDPSDKRDEDKKNHYNYGWSFY). The chain crosses the membrane as a helical span at residues 187-207 (FGALSFIVAETVGVLAVNIYI). The Cytoplasmic segment spans residues 208–327 (EKNKELRFKT…SMLNRRTTPV (120 aa)). The disordered stretch occupies residues 235-261 (SYRYRRRRSRSSSRSTEASPSRDVSPM). Low complexity predominate over residues 246 to 256 (SSRSTEASPSR). Serine 259 bears the Phosphoserine mark.

This sequence belongs to the PMP-22/EMP/MP20 family. CACNG subfamily. As to quaternary structure, interacts with CACNA1C. Identified in a complex with the L-type calcium channel subunits CACNA1C, CACNA2D1 and either CACNB1 or CACNB2. Acts as an auxiliary subunit for AMPA-selective glutamate receptors (AMPARs). Interacts with GRIA1. Detected in heart left ventricle.

The protein resides in the cell membrane. Its function is as follows. Regulates the activity of L-type calcium channels that contain CACNA1C as pore-forming subunit. Regulates the trafficking and gating properties of AMPA-selective glutamate receptors (AMPARs), including GRIA1 and GRIA4. Promotes their targeting to the cell membrane and synapses and modulates their gating properties by slowing their rates of activation, deactivation and desensitization and by mediating their resensitization. The chain is Voltage-dependent calcium channel gamma-4 subunit (CACNG4) from Homo sapiens (Human).